A 93-amino-acid polypeptide reads, in one-letter code: Allatostatin C (93 aa).

A signal peptide spans 1 to 23 (MSSVRNIAALALVLLVLAEWSAA). Positions 24–61 (MPTTDKDKERLLNTVDLIDDDGSIETALINYLFTKQIV) are excised as a propeptide. Cysteines 83 and 90 form a disulfide.

The protein localises to the secreted. Inhibits juvenile hormone biosynthesis. The chain is Allatostatin C from Camponotus floridanus (Florida carpenter ant).